A 562-amino-acid chain; its full sequence is Tripeptidyl-peptidase 1 (562 aa).

The N-terminal stretch at 1–19 (MGLQARLLGLLALVIAGKC) is a signal peptide. A propeptide spans 20–194 (TYNPEPDQRW…PEPQQVGTVS (175 aa)) (removed in mature form). The cysteines at positions 111 and 122 are disulfide-linked. Positions 198–562 (GVTPSVLRQR…PALLKTLLNP (365 aa)) constitute a Peptidase S53 domain. N-linked (GlcNAc...) asparagine glycosylation is present at N209. N221 carries N-linked (GlcNAc...) (high mannose) asparagine glycosylation. Residues E271 and D275 each act as charge relay system in the active site. N285, N312, and N442 each carry an N-linked (GlcNAc...) asparagine glycan. Intrachain disulfides connect C364–C525 and C521–C536. Catalysis depends on S474, which acts as the Charge relay system. D516 and V517 together coordinate Ca(2+). Ca(2+)-binding residues include G538, G540, and D542.

Monomer. Interacts with CLN5. Interacts with CLN3. Ca(2+) is required as a cofactor. In terms of processing, activated by autocatalytic proteolytical processing upon acidification. N-glycosylation is required for processing and activity.

The protein resides in the lysosome. The protein localises to the melanosome. It carries out the reaction Release of an N-terminal tripeptide from a polypeptide, but also has endopeptidase activity.. In terms of biological role, lysosomal serine protease with tripeptidyl-peptidase I activity. May act as a non-specific lysosomal peptidase which generates tripeptides from the breakdown products produced by lysosomal proteinases. Requires substrates with an unsubstituted N-terminus. In Mus musculus (Mouse), this protein is Tripeptidyl-peptidase 1 (Tpp1).